The sequence spans 132 residues: Small ribosomal subunit protein uS8 (132 aa).

It belongs to the universal ribosomal protein uS8 family. In terms of assembly, part of the 30S ribosomal subunit. Contacts proteins S5 and S12.

In terms of biological role, one of the primary rRNA binding proteins, it binds directly to 16S rRNA central domain where it helps coordinate assembly of the platform of the 30S subunit. This Xanthomonas campestris pv. campestris (strain 8004) protein is Small ribosomal subunit protein uS8.